The chain runs to 346 residues: Histidinol-phosphate aminotransferase (346 aa).

Residue lysine 206 is modified to N6-(pyridoxal phosphate)lysine.

Belongs to the class-II pyridoxal-phosphate-dependent aminotransferase family. Histidinol-phosphate aminotransferase subfamily. As to quaternary structure, homodimer. The cofactor is pyridoxal 5'-phosphate.

It catalyses the reaction L-histidinol phosphate + 2-oxoglutarate = 3-(imidazol-4-yl)-2-oxopropyl phosphate + L-glutamate. It participates in amino-acid biosynthesis; L-histidine biosynthesis; L-histidine from 5-phospho-alpha-D-ribose 1-diphosphate: step 7/9. The chain is Histidinol-phosphate aminotransferase from Bacteroides thetaiotaomicron (strain ATCC 29148 / DSM 2079 / JCM 5827 / CCUG 10774 / NCTC 10582 / VPI-5482 / E50).